The sequence spans 159 residues: Eukaryotic translation initiation factor 5A-2 (159 aa).

The segment covering 1-10 has biased composition (basic and acidic residues); that stretch reads MSDDEHHFEA. Residues 1–25 form a disordered region; that stretch reads MSDDEHHFEASESGASKTYPQSAGN. S2 is subject to Phosphoserine. Polar residues predominate over residues 13 to 24; the sequence is SGASKTYPQSAG. K51 bears the Hypusine mark.

Belongs to the eIF-5A family. Homodimer. Interacts with AHK4 and AHP1. Cytokinin regulates the formation of the AHP1-AHK4-ELF5A-2 complex. Lys-51 undergoes hypusination, a unique post-translational modification that consists in the addition of a butylamino group from spermidine to lysine side chain, leading to the formation of the unusual amino acid hypusine. eIF-5As are the only known proteins to undergo this modification, which is essential for their function. Ubiquitous. In roots, expressed mostly inside the stele of the mature zone.

The protein localises to the cytoplasm. It localises to the nucleus. In terms of biological role, translation factor that promotes translation elongation and termination, particularly upon ribosome stalling at specific amino acid sequence contexts. Binds between the exit (E) and peptidyl (P) site of the ribosome and promotes rescue of stalled ribosome: specifically required for efficient translation of polyproline-containing peptides as well as other motifs that stall the ribosome. Acts as a ribosome quality control (RQC) cofactor by joining the RQC complex to facilitate peptidyl transfer during CAT tailing step. Regulates cytokinin-mediated root protoxylem specification and represses secifically the expression of AHP6. Regulates the induction of programmed cell death caused by infection with virulent pathogen. This is Eukaryotic translation initiation factor 5A-2 (ELF5A-2) from Arabidopsis thaliana (Mouse-ear cress).